Consider the following 216-residue polypeptide: Lipoprotein signal peptidase (216 aa).

Positions 1 to 21 (MATSRTAPTRAPSLRSSPALE) are disordered. Helical transmembrane passes span 31-51 (VGALVILAVVALCVYLMDQIT), 89-109 (GSTWIFSLVGVGVLGFVIWYA), and 114-134 (STAWAILFGLLLGGLLGNLTD). Catalysis depends on residues Asp-149 and Asp-164. Residues 159 to 179 (IFNLADVAIVFSMGLFLLLTL) form a helical membrane-spanning segment. Residues 189–216 (QRDEGAGVSSASPAGDESAADKPENLSA) are disordered. Basic and acidic residues predominate over residues 207–216 (AADKPENLSA).

It belongs to the peptidase A8 family.

Its subcellular location is the cell membrane. The catalysed reaction is Release of signal peptides from bacterial membrane prolipoproteins. Hydrolyzes -Xaa-Yaa-Zaa-|-(S,diacylglyceryl)Cys-, in which Xaa is hydrophobic (preferably Leu), and Yaa (Ala or Ser) and Zaa (Gly or Ala) have small, neutral side chains.. Its pathway is protein modification; lipoprotein biosynthesis (signal peptide cleavage). Functionally, this protein specifically catalyzes the removal of signal peptides from prolipoproteins. This Leifsonia xyli subsp. xyli (strain CTCB07) protein is Lipoprotein signal peptidase.